We begin with the raw amino-acid sequence, 625 residues long: Probable potassium transport system protein Kup 1 (625 aa).

12 helical membrane passes run 14–34 (LSLLALSALGIVFGDIGTSPL), 50–70 (AAAVLGALSLVIWTLFIITTV), 104–124 (IVALGLFGAALIYGDGAITPA), 139–159 (PALQPYVVPAAVVILLALFAI), 170–190 (LFGPVMLLWFVTIAVLGLVGI), 213–233 (GATGFLVLGSVFLCVTGAEAL), 249–269 (WFAVVFPSLIINYAGQAALVI), 287–307 (LLLPLIGLATLATIIASQSVI), 339–359 (IYVGAVNWLLMLVTVSLTIGF), 368–388 (AYGIAVSLTMLMTSALLFIAM), 396–416 (LLAAGAVAGVFLTIDSAFFLA), and 421–441 (IAEGGYVPLLLATSVYGLMWI).

It belongs to the HAK/KUP transporter (TC 2.A.72) family.

The protein localises to the cell inner membrane. The enzyme catalyses K(+)(in) + H(+)(in) = K(+)(out) + H(+)(out). Transport of potassium into the cell. Likely operates as a K(+):H(+) symporter. The protein is Probable potassium transport system protein Kup 1 of Bradyrhizobium sp. (strain ORS 278).